Consider the following 78-residue polypeptide: Protein GPR15LG (78 aa).

Residues 1 to 24 form the signal peptide; it reads MRLLALSGLLCMLLLCFCIFSSEG. Intrachain disulfides connect C37/C60 and C38/C57.

Interacts with SUSD2; the interaction is direct. Highly abundant in the testis, colon, eye, and tongue. Detected in the epithelial layer of the colon, but not the small intestine.

The protein resides in the secreted. Functionally, highly cationic protein that has multiple functions. Acts as a chemotactic factor that mediates lymphocytes recruitment to epithelia through binding and activation of the G-protein coupled receptor GPR15. May be a tumor suppressor; together with SUSD2 has a growth inhibitory effect on colon cancer cells which includes G1 cell cycle arrest. May regulate keratinocyte proliferation. In addition, through activation of Mas-related G protein-coupled receptors (MRGPRs) contributes to pruritogenesis by activating itch-selective sensory neurons and mast cells degranulation. In terms of biological role, has antimicrobial activity against Gram-positive bacteria, including Staphylococcus aureus and Actinomyces spec., and Mycoplasma hominis and lentivirus. In Mus musculus (Mouse), this protein is Protein GPR15LG (Gpr15lg).